A 1188-amino-acid chain; its full sequence is Phospholipid-transporting ATPase IB (1188 aa).

At 1–94 the chain is on the cytoplasmic side; the sequence is MLNGAGLDKA…PRFLYEQIRR (94 aa). Threonine 45 bears the Phosphothreonine mark. A helical transmembrane segment spans residues 95–115; it reads AANAFFLFIALLQQIPDVSPT. At 116–119 the chain is on the extracellular side; that stretch reads GRYT. A helical transmembrane segment spans residues 120 to 140; it reads TLVPLIIILTIAGIKEIVEDF. Topologically, residues 141–316 are cytoplasmic; that stretch reads KRHKADNAVN…SNVEKVTNVQ (176 aa). The chain crosses the membrane as a helical span at residues 317–337; the sequence is ILVLFGILLVMALVSSAGALY. Residues 338-364 are Extracellular-facing; it reads WNRSHGEKNWYIKKMDTTSDNFGYNLL. Residues 365-385 traverse the membrane as a helical segment; it reads TFIILYNNLIPISLLVTLEVV. Residues 386-887 lie on the Cytoplasmic side of the membrane; the sequence is KYTQALFINW…CILYCFYKNV (502 aa). The active-site 4-aspartylphosphate intermediate is the aspartate 428. ATP is bound by residues aspartate 428, lysine 429, threonine 430, glutamate 528, phenylalanine 569, lysine 592, arginine 625, threonine 705, glycine 706, aspartate 707, arginine 795, and lysine 801. Aspartate 428 serves as a coordination point for Mg(2+). A Mg(2+)-binding site is contributed by threonine 430. Residue aspartate 821 participates in Mg(2+) binding. The ATP site is built by asparagine 824 and aspartate 825. Residue aspartate 825 coordinates Mg(2+). Residues 888–908 traverse the membrane as a helical segment; the sequence is VLYIIELWFAFVNGFSGQILF. The Extracellular portion of the chain corresponds to 909-910; it reads ER. The helical transmembrane segment at 911–931 threads the bilayer; the sequence is WCIGLYNVIFTALPPFTLGIF. The Cytoplasmic segment spans residues 932-959; the sequence is ERSCTQESMLRFPQLYKITQNGEGFNTK. A helical transmembrane segment spans residues 960–980; sequence VFWGHCINALVHSLILFWFPM. At 981-997 the chain is on the extracellular side; that stretch reads KALEHDTVLTSGHATDY. Residues 998 to 1018 form a helical membrane-spanning segment; that stretch reads LFVGNIVYTYVVVTVCLKAGL. Residues 1019-1028 lie on the Cytoplasmic side of the membrane; sequence ETTAWTKFSH. The helical transmembrane segment at 1029–1049 threads the bilayer; the sequence is LAVWGSMLTWLVFFGIYSTIW. Residues 1050–1063 lie on the Extracellular side of the membrane; it reads PTIPIAPDMRGQAT. A helical transmembrane segment spans residues 1064 to 1084; it reads MVLSSAHFWLGLFLVPTACLI. At 1085–1188 the chain is on the cytoplasmic side; that stretch reads EDVAWRAAKH…DTTKKKSRKK (104 aa). The tract at residues 1162 to 1188 is disordered; it reads SQEEHGAVSQEEVIRAYDTTKKKSRKK. Basic and acidic residues predominate over residues 1163 to 1182; the sequence is QEEHGAVSQEEVIRAYDTTK.

This sequence belongs to the cation transport ATPase (P-type) (TC 3.A.3) family. Type IV subfamily. Component of a P4-ATPase flippase complex which consists of a catalytic alpha subunit and an accessory beta subunit. Interacts with TMEM30A to form a flippase complex. The cofactor is Mg(2+). Strongly expressed in the brain, cerebellum, retina and testis.

It localises to the membrane. The protein resides in the golgi apparatus membrane. It is found in the endosome membrane. Its subcellular location is the cell membrane. The protein localises to the photoreceptor outer segment membrane. It localises to the photoreceptor inner segment membrane. The catalysed reaction is ATP + H2O + phospholipidSide 1 = ADP + phosphate + phospholipidSide 2.. It catalyses the reaction a 1,2-diacyl-sn-glycero-3-phospho-L-serine(out) + ATP + H2O = a 1,2-diacyl-sn-glycero-3-phospho-L-serine(in) + ADP + phosphate + H(+). The enzyme catalyses a 1,2-diacyl-sn-glycero-3-phosphoethanolamine(in) + ATP + H2O = a 1,2-diacyl-sn-glycero-3-phosphoethanolamine(out) + ADP + phosphate + H(+). In terms of biological role, catalytic component of a P4-ATPase flippase complex which catalyzes the hydrolysis of ATP coupled to the transport of aminophospholipids from the outer to the inner leaflet of various membranes and ensures the maintenance of asymmetric distribution of phospholipids. Able to translocate phosphatidylserine, but not phosphatidylcholine. Phospholipid translocation also seems to be implicated in vesicle formation and in uptake of lipid signaling molecules. Reconstituted to liposomes, the ATP8A2:TMEM30A flippase complex predominantly transports phosphatidylserine (PS) and to a lesser extent phosphatidylethanolamine (PE). Phospholipid translocation is not associated with a countertransport of an inorganic ion or other charged substrate from the cytoplasmic side toward the exoplasm in connection with the phosphorylation from ATP. ATP8A2:TMEM30A may be involved in regulation of neurite outgrowth. Proposed to function in the generation and maintenance of phospholipid asymmetry in photoreceptor disk membranes and neuronal axon membranes. May be involved in vesicle trafficking in neuronal cells. Required for normal visual and auditory function; involved in photoreceptor and inner ear spiral ganglion cell survival. This is Phospholipid-transporting ATPase IB from Homo sapiens (Human).